Consider the following 461-residue polypeptide: Histone acetyltransferase KAT5 (461 aa).

One can recognise a Tudor-knot domain in the interval 8–65 (IEGCRLPVLRRNQDNEDEWPLAEILSVKDISGRKLFYVHYIDFNKRLDEWVTHERLDL). Lysine 52 bears the N6-acetyllysine mark. The disordered stretch occupies residues 70–168 (FPKKEAKTPT…RMTGSLVSDR (99 aa)). Phosphoserine occurs at positions 86 and 90. Residues 90-100 (SPEREVKRKVE) show a composition bias toward basic and acidic residues. Residues lysine 96, lysine 98, lysine 135, and lysine 137 each carry the N6-acetyllysine; by autocatalysis modification. Residue serine 147 is modified to Phosphoserine. An MYST-type HAT domain is found at 175-452 (TRMKNIECIE…IDSKCLHFTP (278 aa)). The C2HC MYST-type zinc-finger motif lies at 208 to 233 (LYLCEFCLKYGRSLKCLQRHLTKCDL). An N6-acetyllysine; by autocatalysis modification is found at lysine 275. Positions 316–461 (ACILTLPPYQ…PKDWSKRGKW (146 aa)) are interaction with ATF2. Acetyl-CoA-binding positions include 318 to 320 (ILT) and 325 to 331 (QRRGYGK). Glutamate 351 (proton donor/acceptor) is an active-site residue. Acetyl-CoA-binding residues include serine 355 and serine 364. Lysine 378 is covalently cross-linked (Glycyl lysine isopeptide (Lys-Gly) (interchain with G-Cter in SUMO1); alternate). A Glycyl lysine isopeptide (Lys-Gly) (interchain with G-Cter in SUMO2); alternate cross-link involves residue lysine 378. Lysine 399 participates in a covalent cross-link: Glycyl lysine isopeptide (Lys-Gly) (interchain with G-Cter in SUMO1).

This sequence belongs to the MYST (SAS/MOZ) family. As to quaternary structure, component of the NuA4 histone acetyltransferase complex which contains the catalytic subunit KAT5/TIP60 and the subunits EP400, TRRAP/PAF400, BRD8/SMAP, EPC1, DMAP1/DNMAP1, RUVBL1/TIP49, RUVBL2, ING3, actin, ACTL6A/BAF53A, MORF4L1/MRG15, MORF4L2/MRGX, MRGBP, YEATS4/GAS41, VPS72/YL1 and MEAF6. KAT5/TIP60, EPC1, and ING3 together constitute a minimal HAT complex termed Piccolo NuA4. The NuA4 complex interacts with MYC. Interacts with ATM. Interacts with JADE1. Interacts with PLA2G4A/CPLA2, EDNRA and HDAC7. Interacts with the cytoplasmic tail of APP and APBB1/FE65. Interacts with TRIM24 and TRIM68. Forms a complex with SENP6 and UBE2I in response to UV irradiation. Identified in a complex with HINT1. Interacts with ATF2 and CUL3. Interacts with NR1D2 (via N-terminus). Component of a SWR1-like complex. Interacts with FOXP3. Interacts with ZBTB49. Interacts with SRF. Interacts with ATF3; promoting autoacetylation and deubiquitination by USP7. Interacts with EP300/p300; interaction promotes KAT5 autoacetylation. Interacts with PRKDC; interaction is impaired following KAT5 sumoylation. Interacts with GPR50. Post-translationally, phosphorylated on Ser-86 and Ser-90; enhanced during G2/M phase. The phosphorylated form has a higher activity. Phosphorylation at Ser-90 by CDK1 or CDK9 is a prerequisite for phosphorylation at Ser-86 by GSK3. Phosphorylation at Ser-86 by GSK3 (GSK3A or GSK3B) activates acetyltransferase and acyltransferase activities. Phosphorylation at Ser-90 by CDK9 promotes KAT5 recruitment to chromatin. Phosphorylation by VRK1 following DNA damage promotes KAT5 association with chromatin and histone acetyltransferase activity. In terms of processing, autoacetylated. Autoacetylation is required for histone acetyltransferase activity. Autoacetylation at Lys-275 is facilitated by interaction with EP300/p300: it prevents ubiquitination and subsequent degradation by the proteasome and promotes acetylation of target proteins. Deacetylated by HDAC3 and SIRT1. Deacetylation by HDAC3 promotes its ubiquitination and cytoplasmic localization. Sumoylated by UBE2I at Lys-378 and Lys-399, leading to increase of its histone acetyltransferase activity in UV-induced DNA damage response, as well as its translocation to nuclear bodies. Sumoylation with SUMO2 by PIAS4 at Lys-378 promotes repair of DNA double-strand breaks (DSBs) via homologous recombination (HR). Sumoylation by PIAS4 impairs interaction with PRKDC, inhibiting non-homologous end joining (NHEJ)-mediated repair of DSBs, thereby facilitating HR. Desumoylated by SENP3. Post-translationally, ubiquitinated by MDM2, leading to its proteasome-dependent degradation. Ubiquitination is prevented by autoacetylation at Lys-275. Ubiquitinated following deacetylation by HDAC3, leading to cytoplasmic localization. Deubiquitinated by USP7 following interaction with ATF3, promoting its stabilization.

Its subcellular location is the nucleus. It localises to the chromosome. The protein resides in the cytoplasm. It is found in the centromere. The protein localises to the kinetochore. Its subcellular location is the cytoskeleton. It localises to the spindle pole. The protein resides in the nucleolus. It is found in the perinuclear region. It carries out the reaction L-lysyl-[histone] + acetyl-CoA = N(6)-acetyl-L-lysyl-[histone] + CoA + H(+). The enzyme catalyses L-lysyl-[protein] + acetyl-CoA = N(6)-acetyl-L-lysyl-[protein] + CoA + H(+). The catalysed reaction is (2E)-butenoyl-CoA + L-lysyl-[protein] = N(6)-(2E)-butenoyl-L-lysyl-[protein] + CoA + H(+). It catalyses the reaction 2-hydroxyisobutanoyl-CoA + L-lysyl-[protein] = N(6)-(2-hydroxyisobutanoyl)-L-lysyl-[protein] + CoA + H(+). It carries out the reaction (S)-lactoyl-CoA + L-lysyl-[protein] = N(6)-[(S)-lactoyl]-L-lysyl-[protein] + CoA + H(+). Its activity is regulated as follows. Acyltransferase and acetyltransferase activities are activated by phosphorylation and autoacetylation. Autoacetylation activates the histone acetyltransferase activity. In terms of biological role, catalytic subunit of the NuA4 histone acetyltransferase complex, a multiprotein complex involved in transcriptional activation of select genes principally by acetylation of nucleosomal histones H2A and H4. Histone acetylation alters nucleosome-DNA interactions and promotes interaction of the modified histones with other proteins which positively regulate transcription. The NuA4 histone acetyltransferase complex is required for the activation of transcriptional programs associated with proto-oncogene mediated growth induction, tumor suppressor mediated growth arrest and replicative senescence, apoptosis, and DNA repair. The NuA4 complex plays a direct role in repair of DNA double-strand breaks (DSBs) by promoting homologous recombination (HR): the complex inhibits TP53BP1 binding to chromatin via MBTD1, which recognizes and binds histone H4 trimethylated at 'Lys-20' (H4K20me), and KAT5 that catalyzes acetylation of 'Lys-15' of histone H2A (H2AK15ac), thereby blocking the ubiquitination mark required for TP53BP1 localization at DNA breaks. Also involved in DSB repair by mediating acetylation of 'Lys-5' of histone H2AX (H2AXK5ac), promoting NBN/NBS1 assembly at the sites of DNA damage. The NuA4 complex plays a key role in hematopoietic stem cell maintenance and is required to maintain acetylated H2A.Z/H2AZ1 at MYC target genes. The NuA4 complex is also required for spermatid development by promoting acetylation of histones: histone hyperacetylation is required for histone replacement during the transition from round to elongating spermatids. Component of a SWR1-like complex that specifically mediates the removal of histone H2A.Z/H2AZ1 from the nucleosome. Also acetylates non-histone proteins, such as BMAL1, ATM, AURKB, CHKA, CGAS, ERCC4/XPF, LPIN1, TP53/p53, NDC80/HEC1, NR1D2, RAN, SOX4, FOXP3, SQSTM1, ULK1 and RUBCNL/Pacer. Directly acetylates and activates ATM. Promotes nucleotide excision repair (NER) by mediating acetylation of ERCC4/XPF, thereby promoting formation of the ERCC4-ERCC1 complex. Relieves NR1D2-mediated inhibition of APOC3 expression by acetylating NR1D2. Acts as a regulator of regulatory T-cells (Treg) by catalyzing FOXP3 acetylation, thereby promoting FOXP3 transcriptional repressor activity. Involved in skeletal myoblast differentiation by mediating acetylation of SOX4. Catalyzes acetylation of APBB1/FE65, increasing its transcription activator activity. Promotes transcription elongation during the activation phase of the circadian cycle by catalyzing acetylation of BMAL1, promoting elongation of circadian transcripts. Together with GSK3 (GSK3A or GSK3B), acts as a regulator of autophagy: phosphorylated at Ser-86 by GSK3 under starvation conditions, leading to activate acetyltransferase activity and promote acetylation of key autophagy regulators, such as ULK1 and RUBCNL/Pacer. Acts as a regulator of the cGAS-STING innate antiviral response by catalyzing acetylation the N-terminus of CGAS, thereby promoting CGAS DNA-binding and activation. Also regulates lipid metabolism by mediating acetylation of CHKA or LPIN1. Promotes lipolysis of lipid droplets following glucose deprivation by mediating acetylation of isoform 1 of CHKA, thereby promoting monomerization of CHKA and its conversion into a tyrosine-protein kinase. Acts as a regulator of fatty-acid-induced triacylglycerol synthesis by catalyzing acetylation of LPIN1, thereby promoting the synthesis of diacylglycerol. In addition to protein acetyltransferase, can use different acyl-CoA substrates, such as (2E)-butenoyl-CoA (crotonyl-CoA), S-lactoyl-CoA (lactyl-CoA) and 2-hydroxyisobutanoyl-CoA (2-hydroxyisobutyryl-CoA), and is able to mediate protein crotonylation, lactylation and 2-hydroxyisobutyrylation, respectively. Acts as a key regulator of chromosome segregation and kinetochore-microtubule attachment during mitosis by mediating acetylation or crotonylation of target proteins. Catalyzes acetylation of AURKB at kinetochores, increasing AURKB activity and promoting accurate chromosome segregation in mitosis. Acetylates RAN during mitosis, promoting microtubule assembly at mitotic chromosomes. Acetylates NDC80/HEC1 during mitosis, promoting robust kinetochore-microtubule attachment. Catalyzes crotonylation of MAPRE1/EB1, thereby ensuring accurate spindle positioning in mitosis. Catalyzes lactylation of NBN/NBS1 in response to DNA damage, thereby promoting DNA double-strand breaks (DSBs) via homologous recombination (HR). The polypeptide is Histone acetyltransferase KAT5 (Pongo abelii (Sumatran orangutan)).